Here is a 703-residue protein sequence, read N- to C-terminus: uncharacterized protein (703 aa).

Residues 1 to 23 form the signal peptide; the sequence is MKQIMIFLTSFMLLAMTGQTALA. A helical membrane pass occupies residues 673 to 693; it reads MYIGVLALIMVVAAVFIWIAV.

Its subcellular location is the cell membrane. This is an uncharacterized protein from Bacillus subtilis (strain 168).